The following is a 556-amino-acid chain: GDP-Man:Man(3)GlcNAc(2)-PP-Dol alpha-1,2-mannosyltransferase (556 aa).

Topologically, residues 1-7 (MANGLFT) are lumenal. The helical transmembrane segment at 8–28 (YVAISLFTIGPLLALFIPFVW) threads the bilayer. Over 29 to 184 (RLVGSSLGWY…RWVLASTWPY (156 aa)) the chain is Cytoplasmic. Residues 64 to 79 (SKSAKGRKAEKEDRDT) are compositionally biased toward basic and acidic residues. Residues 64 to 86 (SKSAKGRKAEKEDRDTFNNTEAT) form a disordered region. The segment at residues 185–205 (FTLAGQSFGSLIMAWDAFSLL) is an intramembrane region (helical). Topologically, residues 206-454 (VPDIFVDTMG…VGVNGMWNEH (249 aa)) are cytoplasmic. An intramembrane region (helical) is located at residues 455-475 (FGIGVVEYQAAGLISVVHDSG). Residues 476 to 556 (GPKLDIVVEV…KAVEKPKSRQ (81 aa)) are Cytoplasmic-facing.

It belongs to the glycosyltransferase group 1 family. Glycosyltransferase 4 subfamily.

It localises to the endoplasmic reticulum membrane. It carries out the reaction an alpha-D-Man-(1-&gt;3)-[alpha-D-Man-(1-&gt;6)]-beta-D-Man-(1-&gt;4)-beta-D-GlcNAc-(1-&gt;4)-alpha-D-GlcNAc-diphospho-di-trans,poly-cis-dolichol + 2 GDP-alpha-D-mannose = an alpha-D-Man-(1-&gt;2)-alpha-D-Man-(1-&gt;2)-alpha-D-Man-(1-&gt;3)-[alpha-D-Man-(1-&gt;6)]-beta-D-Man-(1-&gt;4)-beta-D-GlcNAc-(1-&gt;4)-alpha-D-GlcNAc-diphospho-di-trans,poly-cis-dolichol + 2 GDP + 2 H(+). Its pathway is protein modification; protein glycosylation. GDP-Man:Man(3)GlcNAc(2)-PP-Dol alpha-1,2-mannosyltransferase that operates in the biosynthetic pathway of dolichol-linked oligosaccharides, the glycan precursors employed in protein asparagine (N)-glycosylation. The assembly of dolichol-linked oligosaccharides begins on the cytosolic side of the endoplasmic reticulum membrane and finishes in its lumen. The sequential addition of sugars to dolichol pyrophosphate produces dolichol-linked oligosaccharides containing fourteen sugars, including two GlcNAcs, nine mannoses and three glucoses. Once assembled, the oligosaccharide is transferred from the lipid to nascent proteins by oligosaccharyltransferases. Catalyzes, on the cytoplasmic face of the endoplasmic reticulum, the addition of the fourth and fifth mannose residues to the dolichol-linked oligosaccharide chain, to produce Man(5)GlcNAc(2)-PP-dolichol core oligosaccharide. This Neurospora crassa (strain ATCC 24698 / 74-OR23-1A / CBS 708.71 / DSM 1257 / FGSC 987) protein is GDP-Man:Man(3)GlcNAc(2)-PP-Dol alpha-1,2-mannosyltransferase (alg-11).